We begin with the raw amino-acid sequence, 359 residues long: 3-dehydroquinate synthase (359 aa).

NAD(+) contacts are provided by residues 69 to 74 (SGESSK), 103 to 107 (GVVGD), 127 to 128 (TT), lysine 139, lysine 148, and 166 to 169 (TLST). Positions 181, 242, and 259 each coordinate Zn(2+).

Belongs to the sugar phosphate cyclases superfamily. Dehydroquinate synthase family. NAD(+) serves as cofactor. It depends on Co(2+) as a cofactor. The cofactor is Zn(2+).

The protein resides in the cytoplasm. It carries out the reaction 7-phospho-2-dehydro-3-deoxy-D-arabino-heptonate = 3-dehydroquinate + phosphate. It participates in metabolic intermediate biosynthesis; chorismate biosynthesis; chorismate from D-erythrose 4-phosphate and phosphoenolpyruvate: step 2/7. Its function is as follows. Catalyzes the conversion of 3-deoxy-D-arabino-heptulosonate 7-phosphate (DAHP) to dehydroquinate (DHQ). This Oceanobacillus iheyensis (strain DSM 14371 / CIP 107618 / JCM 11309 / KCTC 3954 / HTE831) protein is 3-dehydroquinate synthase.